A 187-amino-acid chain; its full sequence is Mitochondrial import receptor subunit TOM20-4 (187 aa).

Met1 carries the post-translational modification N-acetylmethionine. Residues Met1–Asp160 are Cytoplasmic-facing. The stretch at Leu84–Ser117 is one TPR repeat. Residues Val161–Ala178 form a helical membrane-spanning segment. Residues Asn179–Gln187 lie on the Mitochondrial intermembrane side of the membrane. The AKR2A-binding sequence (ABS) required for mitochondrion outer membrane targeting motif lies at Asn179–Gln187.

It belongs to the Tom20 family. In terms of assembly, forms part of the preprotein translocase complex of the outer mitochondrial membrane (TOM complex) which consists of at least 6 different proteins (TOM5, TOM6, TOM7, TOM20, TOM22/TOM9 and TOM40). Interacts with a variety of mitochondrial precursor proteins. Interacts with AKR2A. Component of a mitochondrial large protein complex that contains, at least, MIC60, DGS1, TOM40, TOM20 proteins, and petC/RISP. In terms of processing, the N-terminus is blocked. In terms of tissue distribution, expressed in roots, flowers, young cotyledons and leaves.

It localises to the mitochondrion outer membrane. In terms of biological role, central component of the receptor complex responsible for the recognition and translocation of cytosolically synthesized mitochondrial preproteins. Together with TOM22 functions as the transit peptide receptor at the surface of the mitochondrion outer membrane and facilitates the movement of preproteins into the translocation pore. This is Mitochondrial import receptor subunit TOM20-4 from Arabidopsis thaliana (Mouse-ear cress).